Consider the following 161-residue polypeptide: Nucleotide-binding protein Pcar_0033 (161 aa).

The protein belongs to the YajQ family.

Functionally, nucleotide-binding protein. This is Nucleotide-binding protein Pcar_0033 from Syntrophotalea carbinolica (strain DSM 2380 / NBRC 103641 / GraBd1) (Pelobacter carbinolicus).